Here is a 296-residue protein sequence, read N- to C-terminus: Inactive uridine phosphorylase B (296 aa).

It belongs to the PNP/UDP phosphorylase family. In terms of assembly, homodimer.

The polypeptide is Inactive uridine phosphorylase B (Schistosoma mansoni (Blood fluke)).